The sequence spans 214 residues: MLNAREEEVLNVIIENVKLKGYPPSVREIGEAVGLSSSSTVHSYLKRLEQKGYLRRDPTKPRAIEVIMSELSKNPSSHPLTSELSRYSDEELISIPLLGEVAAGVPLLAVENYDEKVTLPRSFTGYGEFFMLSVRGDSMIEAGILPGDLVLVRRQESVSNGDIAVALLEDEATVKRFYKEKNRIRLQPENSLLSPIYVQEVKILGKVVGLMRKI.

A DNA-binding region (H-T-H motif) is located at residues 26 to 46 (VREIGEAVGLSSSSTVHSYLK). Active-site for autocatalytic cleavage activity residues include Ser138 and Lys175.

This sequence belongs to the peptidase S24 family. In terms of assembly, homodimer.

The catalysed reaction is Hydrolysis of Ala-|-Gly bond in repressor LexA.. Functionally, represses a number of genes involved in the response to DNA damage (SOS response), including recA and lexA. In the presence of single-stranded DNA, RecA interacts with LexA causing an autocatalytic cleavage which disrupts the DNA-binding part of LexA, leading to derepression of the SOS regulon and eventually DNA repair. This chain is LexA repressor, found in Desulforamulus reducens (strain ATCC BAA-1160 / DSM 100696 / MI-1) (Desulfotomaculum reducens).